The chain runs to 152 residues: Xanthine-guanine phosphoribosyltransferase (152 aa).

5-phospho-alpha-D-ribose 1-diphosphate-binding positions include 37 to 38 (RG), Arg-69, and 88 to 96 (DDLVDTGGT). Arg-69 serves as a coordination point for GMP. Asp-89 contributes to the Mg(2+) binding site. Asp-92 and Ile-135 together coordinate guanine. Xanthine is bound by residues Asp-92 and Ile-135. Residues 92–96 (DTGGT) and 134–135 (WI) each bind GMP.

The protein belongs to the purine/pyrimidine phosphoribosyltransferase family. XGPT subfamily. Homotetramer. Mg(2+) is required as a cofactor.

It is found in the cell inner membrane. The catalysed reaction is GMP + diphosphate = guanine + 5-phospho-alpha-D-ribose 1-diphosphate. It carries out the reaction XMP + diphosphate = xanthine + 5-phospho-alpha-D-ribose 1-diphosphate. The enzyme catalyses IMP + diphosphate = hypoxanthine + 5-phospho-alpha-D-ribose 1-diphosphate. It functions in the pathway purine metabolism; GMP biosynthesis via salvage pathway; GMP from guanine: step 1/1. The protein operates within purine metabolism; XMP biosynthesis via salvage pathway; XMP from xanthine: step 1/1. In terms of biological role, purine salvage pathway enzyme that catalyzes the transfer of the ribosyl-5-phosphate group from 5-phospho-alpha-D-ribose 1-diphosphate (PRPP) to the N9 position of the 6-oxopurines guanine and xanthine to form the corresponding ribonucleotides GMP (guanosine 5'-monophosphate) and XMP (xanthosine 5'-monophosphate), with the release of PPi. To a lesser extent, also acts on hypoxanthine. This is Xanthine-guanine phosphoribosyltransferase from Escherichia coli (strain UTI89 / UPEC).